Reading from the N-terminus, the 1010-residue chain is ATP-dependent DNA/RNA helicase DHX36 (1010 aa).

Residues 1-54 (MSYDYHQNWGRDGGPRSSGGGYGGSYGGSHGGGHGGNRGSGGGGGGGGGRGGRG) are required for recruitment to cytoplasmic stress granules. A disordered region spans residues 1–63 (MSYDYHQNWG…GRHPGHLKGR (63 aa)). Residues 1–107 (MSYDYHQNWG…IVQLLHSVQT (107 aa)) form a required for the pre-miR-134 transport region. Residues 1–202 (MSYDYHQNWG…KKTDLRYIEM (202 aa)) are necessary for nuclear and nucleolar caps localizations. The span at 16-51 (RSSGGGYGGSYGGSHGGGHGGNRGSGGGGGGGGGRG) shows a compositional bias: gly residues. Residues 56 to 78 (HPGHLKGREIGLWYAKKQGQKNK) form a DSM (DHX36-specific motif) region. The required for G4-DNA- and G4-RNA-binding stretch occupies residues 56-108 (HPGHLKGREIGLWYAKKQGQKNKEAERQERAVVHMDERREEQIVQLLHSVQTK). 2 recA-like domain regions span residues 109–388 (NDKD…MIHI) and 389–630 (PGFT…DYQL). The region spanning 219-389 (VNMIDNHQVT…FGNCPMIHIP (171 aa)) is the Helicase ATP-binding domain. Residue 235–240 (GCGKTT) coordinates ATP. Residues 267-319 (RRISAISVAERVAAERAESCGNGNSTGYQIRLQSRLPRKQGSILYCTTGIILQ) are necessary for interaction with single-stranded DNA at the 3'-end of the G4-DNA structure. Positions 336–339 (DEIH) match the DEAH box motif. Glutamate 337 and histidine 339 together coordinate Mg(2+). One can recognise a Helicase C-terminal domain in the interval 479 to 649 (ALIRYIVLEE…ELCLQIKILR (171 aa)). Residues 500 to 559 (WDNISTLHDLLMSQVMFKSDKFIIIPLHSLMPTVNQTQVFKRTPPGVRKIVIATNIAETS) are necessary for interaction with single-stranded DNA at the 3'-end of the G4-DNA structure. The short motif at 519 to 530 (DKFIIIPLHSLM) is the Nuclear localization signal element. Residues serine 559 and 604-607 (RAGR) contribute to the ATP site. The segment at 631–700 (PEILRTPLEE…LGVHLARLPV (70 aa)) is WH domain. Necessary for interaction with single-stranded DNA at the 3'-end of the G4-DNA structure regions lie at residues 640–699 (ELCL…ARLP), 851–862 (NLGKKRKMVKVY), and 872–902 (HPKS…IYLY). The segment at 843–907 (PKVAKIRLNL…SIYLYDCTEV (65 aa)) is OB-fold-like subdomains. At lysine 949 the chain carries N6-acetyllysine. Serine 965 carries the phosphoserine modification.

As to quaternary structure, found in a multi-helicase-TICAM1 complex at least composed of DHX36, DDX1, DDX21 and TICAM1; this complex exists in resting cells with or without dsRNA poly(I:C) ligand stimulation. Interacts (via C-terminus) with TICAM1 (via TIR domain). Interacts (via C-terminus) with DDX21; this interaction serves as bridges to TICAM1. Interacts with TERT; this interaction is dependent on the ability of DHX36 to bind to the G-quadruplex RNA (G4-RNA) structure present in the telomerase RNA template component (TERC). Interacts with DKC1; this interaction is dependent on the ability of DHX36 to bind to the G4-RNA structure present in TERC. Interacts with PARN; this interaction stimulates PARN to enhance uPA mRNA decay. Interacts with EXOSC3; this interaction occurs in a RNase-insensitive manner. Interacts with EXOSC10; this interaction occurs in a RNase-insensitive manner. Interacts with ILF3; this interaction occurs in a RNA-dependent manner. Interacts with ELAVL1; this interaction occurs in an RNA-dependent manner. Interacts with DDX5; this interaction occurs in a RNA-dependent manner. Interacts with DDX17; this interaction occurs in a RNA-dependent manner. Interacts with HDAC1; this interaction occurs in a RNA-dependent manner. Interacts with HDAC3; this interaction occurs in a RNA-dependent manner. Interacts with HDAC4. Interacts with AGO1. Interacts with AGO2. Interacts with ERCC6. The cofactor is Mg(2+).

The protein resides in the nucleus. The protein localises to the cytoplasm. It localises to the cytosol. It is found in the stress granule. Its subcellular location is the nucleus speckle. The protein resides in the chromosome. The protein localises to the telomere. It localises to the mitochondrion. It is found in the perikaryon. Its subcellular location is the cell projection. The protein resides in the dendrite. The protein localises to the axon. The catalysed reaction is ATP + H2O = ADP + phosphate + H(+). ATPase activity is enhanced in the presence of homomeric poly(U) RNAs, but not by double-stranded DNA (dsDNA), double-stranded RNA (dsRNA) and tRNA. Multifunctional ATP-dependent helicase that unwinds G-quadruplex (G4) structures. Plays a role in many biological processes such as genomic integrity, gene expression regulations and as a sensor to initiate antiviral responses. G4 structures correspond to helical structures containing guanine tetrads. Binds with high affinity to and unwinds G4 structures that are formed in nucleic acids (G4-DNA and G4-RNA). Plays a role in genomic integrity. Converts the G4-RNA structure present in telomerase RNA template component (TREC) into a double-stranded RNA to promote P1 helix formation that acts as a template boundary ensuring accurate reverse transcription. Plays a role in transcriptional regulation. Resolves G4-DNA structures in promoters of genes, such as YY1, KIT/c-kit and ALPL and positively regulates their expression. Plays a role in post-transcriptional regulation. Unwinds a G4-RNA structure located in the 3'-UTR polyadenylation site of the pre-mRNA TP53 and stimulates TP53 pre-mRNA 3'-end processing in response to ultraviolet (UV)-induced DNA damage. Binds to the precursor-microRNA-134 (pre-miR-134) terminal loop and regulates its transport into the synapto-dendritic compartment. Involved in the pre-miR-134-dependent inhibition of target gene expression and the control of dendritic spine size. Plays a role in the regulation of cytoplasmic mRNA translation and mRNA stability. Binds to both G4-RNA structures and alternative non-quadruplex-forming sequence within the 3'-UTR of the PITX1 mRNA regulating negatively PITX1 protein expression. Binds to both G4-RNA structure in the 5'-UTR and AU-rich elements (AREs) localized in the 3'-UTR of NKX2-5 mRNA to either stimulate protein translation or induce mRNA decay in an ELAVL1-dependent manner, respectively. Also binds to ARE sequences present in several mRNAs mediating exosome-mediated 3'-5' mRNA degradation. Involved in cytoplasmic urokinase-type plasminogen activator (uPA) mRNA decay. Component of a multi-helicase-TICAM1 complex that acts as a cytoplasmic sensor of viral double-stranded RNA (dsRNA) and plays a role in the activation of a cascade of antiviral responses including the induction of pro-inflammatory cytokines via the adapter molecule TICAM1. Required for the early embryonic development and hematopoiesis. Involved in the regulation of cardioblast differentiation and proliferation during heart development. Involved in spermatogonia differentiation. May play a role in ossification. The protein is ATP-dependent DNA/RNA helicase DHX36 of Bos taurus (Bovine).